Here is a 267-residue protein sequence, read N- to C-terminus: Small ribosomal subunit protein uS3 (267 aa).

The region spanning 43–111 (IRKEMSKDLE…QVQLNIFEVK (69 aa)) is the KH type-2 domain. Residues 216 to 267 (FEEQQAQQNNRPGRRGGDRRPRRGNRSAAPQAAEAPKAEAPAEAAPAAETKE) are disordered. The span at 241 to 267 (RSAAPQAAEAPKAEAPAEAAPAAETKE) shows a compositional bias: low complexity.

Belongs to the universal ribosomal protein uS3 family. As to quaternary structure, part of the 30S ribosomal subunit. Forms a tight complex with proteins S10 and S14.

Functionally, binds the lower part of the 30S subunit head. Binds mRNA in the 70S ribosome, positioning it for translation. The polypeptide is Small ribosomal subunit protein uS3 (Bifidobacterium longum subsp. infantis (strain ATCC 15697 / DSM 20088 / JCM 1222 / NCTC 11817 / S12)).